We begin with the raw amino-acid sequence, 452 residues long: Nebulette (452 aa).

The tract at residues 1-26 (MKVPVSGDVKEETEEENVEQEENQEA) is disordered. Positions 11–23 (EETEEENVEQEEN) are enriched in acidic residues. Nebulin repeat units follow at residues 29-63 (SLKP…KSKD), 64-98 (KCTF…ADLS), 101-135 (LYKD…AEKG), 138-172 (DYTH…GTHT), 173-199 (YTAE…EYKK), 206-240 (KEPS…NEMK), 263-278 (LASD…ENKG), 279-313 (LYHF…KNKG), 315-349 (SMLE…KEIK), 352-386 (SSLD…NEIK), 389-423 (GMEL…TEIK), and 426-452 (GMQV…VRMV).

As to quaternary structure, interacts (via nebulin repeats 1-5) with DESM (via rod region). Interacts (via SH3 domain) with XIRP2.

It localises to the cytoplasm. In terms of biological role, binds to actin and plays an important role in the assembly of the Z-disk. May functionally link sarcomeric actin to the desmin intermediate filaments in the heart muscle sarcomeres. Isoform 2 might play a role in the assembly of focal adhesion. The chain is Nebulette (Nebl) from Mus musculus (Mouse).